The primary structure comprises 901 residues: Protein translocase subunit SecA (901 aa).

Residues glutamine 87, 105–109 (GEGKT), and aspartate 512 contribute to the ATP site. Positions 885, 887, 896, and 897 each coordinate Zn(2+).

It belongs to the SecA family. Monomer and homodimer. Part of the essential Sec protein translocation apparatus which comprises SecA, SecYEG and auxiliary proteins SecDF-YajC and YidC. Zn(2+) serves as cofactor.

It is found in the cell inner membrane. It localises to the cytoplasm. The enzyme catalyses ATP + H2O + cellular proteinSide 1 = ADP + phosphate + cellular proteinSide 2.. In terms of biological role, part of the Sec protein translocase complex. Interacts with the SecYEG preprotein conducting channel. Has a central role in coupling the hydrolysis of ATP to the transfer of proteins into and across the cell membrane, serving both as a receptor for the preprotein-SecB complex and as an ATP-driven molecular motor driving the stepwise translocation of polypeptide chains across the membrane. The sequence is that of Protein translocase subunit SecA from Salmonella paratyphi A (strain ATCC 9150 / SARB42).